A 202-amino-acid polypeptide reads, in one-letter code: Small ribosomal subunit protein uS4c (202 aa).

Residues 90–158 (MRLDNIIFRL…ITKNIELSQK (69 aa)) form the S4 RNA-binding domain.

It belongs to the universal ribosomal protein uS4 family. As to quaternary structure, part of the 30S ribosomal subunit. Contacts protein S5. The interaction surface between S4 and S5 is involved in control of translational fidelity.

Its subcellular location is the plastid. The protein resides in the chloroplast. Its function is as follows. One of the primary rRNA binding proteins, it binds directly to 16S rRNA where it nucleates assembly of the body of the 30S subunit. In terms of biological role, with S5 and S12 plays an important role in translational accuracy. In Marchantia romanica (Liverwort), this protein is Small ribosomal subunit protein uS4c (rps4).